The chain runs to 144 residues: Large ribosomal subunit protein uL15 (144 aa).

The interval 1-53 is disordered; that stretch reads MYLNTLAPAEGAKHSAKRLGRGIGSGLGKTGGRGHKGQKSRTGGGVRRGFEGG. Gly residues predominate over residues 21-31; sequence RGIGSGLGKTG.

Belongs to the universal ribosomal protein uL15 family. In terms of assembly, part of the 50S ribosomal subunit.

In terms of biological role, binds to the 23S rRNA. This chain is Large ribosomal subunit protein uL15, found in Mannheimia succiniciproducens (strain KCTC 0769BP / MBEL55E).